Reading from the N-terminus, the 598-residue chain is UvrABC system protein C (598 aa).

Residues 13–92 (SSPGVYLMKD…IKKYQPRYNV (80 aa)) form the GIY-YIG domain. The UVR domain maps to 206–241 (RSTISNLEKAIEKASQEQKFEHAAALYRTLTLIRQT).

It belongs to the UvrC family. In terms of assembly, interacts with UvrB in an incision complex.

The protein resides in the cytoplasm. Its function is as follows. The UvrABC repair system catalyzes the recognition and processing of DNA lesions. UvrC both incises the 5' and 3' sides of the lesion. The N-terminal half is responsible for the 3' incision and the C-terminal half is responsible for the 5' incision. This Chlamydia trachomatis serovar A (strain ATCC VR-571B / DSM 19440 / HAR-13) protein is UvrABC system protein C.